A 78-amino-acid polypeptide reads, in one-letter code: Defensin-like protein 287 (78 aa).

The N-terminal stretch at 1 to 24 (MNNLRVIMSVLLAVLVFTATVSES) is a signal peptide. Intrachain disulfides connect C39-C59, C45-C64, and C51-C66.

The protein belongs to the DEFL family.

Its subcellular location is the secreted. This chain is Defensin-like protein 287, found in Arabidopsis thaliana (Mouse-ear cress).